Reading from the N-terminus, the 327-residue chain is Ferrochelatase (327 aa).

Fe cation is bound by residues His187 and Glu265.

Belongs to the ferrochelatase family.

The protein localises to the cytoplasm. The enzyme catalyses heme b + 2 H(+) = protoporphyrin IX + Fe(2+). It functions in the pathway porphyrin-containing compound metabolism; protoheme biosynthesis; protoheme from protoporphyrin-IX: step 1/1. In terms of biological role, catalyzes the ferrous insertion into protoporphyrin IX. The polypeptide is Ferrochelatase (Chlamydia pneumoniae (Chlamydophila pneumoniae)).